Reading from the N-terminus, the 375-residue chain is Type II restriction enzyme ApaLI (375 aa).

The catalysed reaction is Endonucleolytic cleavage of DNA to give specific double-stranded fragments with terminal 5'-phosphates.. In terms of biological role, a subtype P restriction enzyme that recognizes the double-stranded sequence 5'-GTGCAC-3' and cleaves after G-1. The chain is Type II restriction enzyme ApaLI from Acetobacter pasteurianus (Acetobacter turbidans).